The primary structure comprises 152 residues: UPF0266 membrane protein YobD (152 aa).

A run of 3 helical transmembrane segments spans residues 6-26 (LVLILFIAALLAFAIYDQFIM), 45-65 (IDSVIFVGLIVILIYNNVTNH), and 67-87 (AQITTWLLSALALMGFYIFWI).

It belongs to the UPF0266 family.

The protein resides in the cell inner membrane. The protein is UPF0266 membrane protein YobD of Escherichia fergusonii (strain ATCC 35469 / DSM 13698 / CCUG 18766 / IAM 14443 / JCM 21226 / LMG 7866 / NBRC 102419 / NCTC 12128 / CDC 0568-73).